We begin with the raw amino-acid sequence, 121 residues long: Large ribosomal subunit protein bL12 (121 aa).

This sequence belongs to the bacterial ribosomal protein bL12 family. In terms of assembly, homodimer. Part of the ribosomal stalk of the 50S ribosomal subunit. Forms a multimeric L10(L12)X complex, where L10 forms an elongated spine to which 2 to 4 L12 dimers bind in a sequential fashion. Binds GTP-bound translation factors.

Functionally, forms part of the ribosomal stalk which helps the ribosome interact with GTP-bound translation factors. Is thus essential for accurate translation. The polypeptide is Large ribosomal subunit protein bL12 (Halalkalibacterium halodurans (strain ATCC BAA-125 / DSM 18197 / FERM 7344 / JCM 9153 / C-125) (Bacillus halodurans)).